A 113-amino-acid chain; its full sequence is Protein MGF 110-2L (113 aa).

A signal peptide spans 1 to 31 (MGFFSYLGLVLVGLASLTSLASLANLQDFST).

This sequence belongs to the asfivirus MGF 110 family.

Its function is as follows. Plays a role in virus cell tropism, and may be required for efficient virus replication in macrophages. This chain is Protein MGF 110-2L, found in African swine fever virus (isolate Pig/Kenya/KEN-50/1950) (ASFV).